The primary structure comprises 379 residues: Glutamate 5-kinase (379 aa).

An ATP-binding site is contributed by Lys-19. 3 residues coordinate substrate: Ser-59, Asp-146, and Asn-158. 178 to 179 (TD) contributes to the ATP binding site. A PUA domain is found at 285–363 (RGAVTVDAGA…SEFERLLGYV (79 aa)).

It belongs to the glutamate 5-kinase family.

It is found in the cytoplasm. The enzyme catalyses L-glutamate + ATP = L-glutamyl 5-phosphate + ADP. It participates in amino-acid biosynthesis; L-proline biosynthesis; L-glutamate 5-semialdehyde from L-glutamate: step 1/2. Its function is as follows. Catalyzes the transfer of a phosphate group to glutamate to form L-glutamate 5-phosphate. The sequence is that of Glutamate 5-kinase from Variovorax paradoxus (strain S110).